The sequence spans 381 residues: Putative 2-heptyl-3-hydroxy-4(1H)-quinolone synthase AqdB1 (381 aa).

It belongs to the 3-hydroxybenzoate 6-hydroxylase family.

It catalyses the reaction 2-heptyl-4(1H)-quinolone + NADH + O2 + H(+) = 2-heptyl-3-hydroxy-4(1H)-quinolone + NAD(+) + H2O. Functionally, could be involved in the degradation of the Pseudomonas aeruginosa quorum sensing signal molecule HHQ (2-heptyl-4-quinolone) to anthranilic acid. May catalyze the hydroxylation of HHQ to PQS (2-heptyl-3-hydroxy-4-quinolone). This chain is Putative 2-heptyl-3-hydroxy-4(1H)-quinolone synthase AqdB1, found in Rhodococcus erythropolis (Arthrobacter picolinophilus).